The primary structure comprises 455 residues: UDP-N-acetylmuramoylalanine--D-glutamate ligase (455 aa).

117–123 lines the ATP pocket; the sequence is GTNGKTT.

The protein belongs to the MurCDEF family.

The protein localises to the cytoplasm. The enzyme catalyses UDP-N-acetyl-alpha-D-muramoyl-L-alanine + D-glutamate + ATP = UDP-N-acetyl-alpha-D-muramoyl-L-alanyl-D-glutamate + ADP + phosphate + H(+). It functions in the pathway cell wall biogenesis; peptidoglycan biosynthesis. In terms of biological role, cell wall formation. Catalyzes the addition of glutamate to the nucleotide precursor UDP-N-acetylmuramoyl-L-alanine (UMA). The polypeptide is UDP-N-acetylmuramoylalanine--D-glutamate ligase (Alkaliphilus metalliredigens (strain QYMF)).